A 568-amino-acid polypeptide reads, in one-letter code: Glucose-6-phosphate isomerase, cytosolic 1 (568 aa).

Catalysis depends on E360, which acts as the Proton donor. Active-site residues include H391 and K516.

It belongs to the GPI family. In terms of assembly, homodimer.

It is found in the cytoplasm. The enzyme catalyses alpha-D-glucose 6-phosphate = beta-D-fructose 6-phosphate. It participates in carbohydrate degradation; glycolysis; D-glyceraldehyde 3-phosphate and glycerone phosphate from D-glucose: step 2/4. This chain is Glucose-6-phosphate isomerase, cytosolic 1 (PGIC1), found in Clarkia mildrediae.